The chain runs to 702 residues: Putative endo-beta-N-acetylglucosaminidase (702 aa).

An N-terminal signal peptide occupies residues 1–23; it reads MKKVRFIFLALLFFLASPEGAMA. Cell wall-binding repeat units lie at residues 42 to 63, 65 to 84, 86 to 105, 124 to 145, 147 to 166, 185 to 206, 208 to 227, 229 to 248, 250 to 271, 273 to 292, 294 to 315, 317 to 336, 338 to 359, 361 to 380, and 382 to 403; these read ANEWVFDTHYQSWFYIKADANY, ENEWLKQGDDYFYLKSGGYM, KSEWVEDKGAFYYLDQDGKM, IEDWVYDSQYDAWFYIKADGQH, EKEWLQIKGKDYYFKSGGYL, QQGWLFDKQYQSWFYIKENGNY, DKEWIFENGHYYYLKSGGYM, ANEWIWDKESWFYLKFDGKI, EKEWVYDSHSQAWYYFKSGGYM, ANEWIWDKESWFYLKFDGKM, ANEWIWDKESWFYLKSDGKI, and ANEWIWDKESWFYLKSDGKM.

It belongs to the glycosyl hydrolase 73 family.

It is found in the secreted. The enzyme catalyses an N(4)-(oligosaccharide-(1-&gt;3)-[oligosaccharide-(1-&gt;6)]-beta-D-Man-(1-&gt;4)-beta-D-GlcNAc-(1-&gt;4)-alpha-D-GlcNAc)-L-asparaginyl-[protein] + H2O = an oligosaccharide-(1-&gt;3)-[oligosaccharide-(1-&gt;6)]-beta-D-Man-(1-&gt;4)-D-GlcNAc + N(4)-(N-acetyl-beta-D-glucosaminyl)-L-asparaginyl-[protein]. In terms of biological role, plays an important role in cell wall degradation and cell separation. In Streptococcus pneumoniae (strain ATCC BAA-255 / R6), this protein is Putative endo-beta-N-acetylglucosaminidase (lytB).